Here is a 531-residue protein sequence, read N- to C-terminus: Aspartate--tRNA ligase, cytoplasmic (531 aa).

Positions 1–45 (MADAAEGEQPKLSKKELNKLARKAKKDEKAGEKGGNQQQAAAMDQ) are disordered. The segment covering 8 to 32 (EQPKLSKKELNKLARKAKKDEKAGE) has biased composition (basic and acidic residues). Glu259 is an L-aspartate binding site. An aspartate region spans residues 281 to 284 (QLYK). Arg303 lines the L-aspartate pocket. ATP is bound by residues 303–305 (RAE), 311–313 (RHM), and Glu454. L-aspartate contacts are provided by Ser457 and Arg461. 502 to 505 (GLER) serves as a coordination point for ATP.

This sequence belongs to the class-II aminoacyl-tRNA synthetase family. Type 2 subfamily. Homodimer.

It localises to the cytoplasm. The enzyme catalyses tRNA(Asp) + L-aspartate + ATP = L-aspartyl-tRNA(Asp) + AMP + diphosphate. This chain is Aspartate--tRNA ligase, cytoplasmic, found in Caenorhabditis elegans.